The primary structure comprises 178 residues: Interleukin-10 (178 aa).

Positions 1–18 (MHSSALLCYLVFLAGVGA) are cleaved as a signal peptide. 2 cysteine pairs are disulfide-bonded: C30-C126 and C80-C132. A glycan (N-linked (GlcNAc...) asparagine) is linked at N67. Residue N134 is glycosylated (N-linked (GlcNAc...) asparagine).

This sequence belongs to the IL-10 family. In terms of assembly, homodimer. Interacts with IL10RA and IL10RB.

It localises to the secreted. Functionally, major immune regulatory cytokine that acts on many cells of the immune system where it has profound anti-inflammatory functions, limiting excessive tissue disruption caused by inflammation. Mechanistically, IL10 binds to its heterotetrameric receptor comprising IL10RA and IL10RB leading to JAK1 and STAT2-mediated phosphorylation of STAT3. In turn, STAT3 translocates to the nucleus where it drives expression of anti-inflammatory mediators. Targets antigen-presenting cells (APCs) such as macrophages and monocytes and inhibits their release of pro-inflammatory cytokines including granulocyte-macrophage colony-stimulating factor /GM-CSF, granulocyte colony-stimulating factor/G-CSF, IL-1 alpha, IL-1 beta, IL-6, IL-8 and TNF-alpha. Also interferes with antigen presentation by reducing the expression of MHC-class II and co-stimulatory molecules, thereby inhibiting their ability to induce T cell activation. In addition, controls the inflammatory response of macrophages by reprogramming essential metabolic pathways including mTOR signaling. The protein is Interleukin-10 (IL10) of Equus caballus (Horse).